A 213-amino-acid chain; its full sequence is GTP cyclohydrolase 1 (213 aa).

Residues cysteine 104, histidine 107, and cysteine 175 each contribute to the Zn(2+) site.

It belongs to the GTP cyclohydrolase I family. In terms of assembly, homomer.

It carries out the reaction GTP + H2O = 7,8-dihydroneopterin 3'-triphosphate + formate + H(+). The protein operates within cofactor biosynthesis; 7,8-dihydroneopterin triphosphate biosynthesis; 7,8-dihydroneopterin triphosphate from GTP: step 1/1. In Brucella canis (strain ATCC 23365 / NCTC 10854 / RM-666), this protein is GTP cyclohydrolase 1.